The sequence spans 203 residues: MQTDSDTRIATVERKTKETNVFVSLDLDGNGEYDVDTGIGFLDHMLEQLSRHSLIDLKVRAQGDLHIDFHHTTEDTGIVIGEAVRKALGDFKGIRRYATAIIPMDETCTRVSIDVSQRPYLIWKVGFTKPKLGDMDTELFKEWFQAFAQNAGITLHIENMYGDNNHHIVESCFKGLARALRDAIEIDPRAANRIPSTKGVLGN.

The protein belongs to the imidazoleglycerol-phosphate dehydratase family.

Its subcellular location is the cytoplasm. It catalyses the reaction D-erythro-1-(imidazol-4-yl)glycerol 3-phosphate = 3-(imidazol-4-yl)-2-oxopropyl phosphate + H2O. Its pathway is amino-acid biosynthesis; L-histidine biosynthesis; L-histidine from 5-phospho-alpha-D-ribose 1-diphosphate: step 6/9. The chain is Imidazoleglycerol-phosphate dehydratase from Parvibaculum lavamentivorans (strain DS-1 / DSM 13023 / NCIMB 13966).